Consider the following 148-residue polypeptide: Ubiquitin-conjugating enzyme E2 5B (148 aa).

Residues 1 to 147 (MASKRILKEL…ARSWTQKYAM (147 aa)) form the UBC core domain. Cysteine 85 acts as the Glycyl thioester intermediate in catalysis.

Belongs to the ubiquitin-conjugating enzyme family.

The enzyme catalyses S-ubiquitinyl-[E1 ubiquitin-activating enzyme]-L-cysteine + [E2 ubiquitin-conjugating enzyme]-L-cysteine = [E1 ubiquitin-activating enzyme]-L-cysteine + S-ubiquitinyl-[E2 ubiquitin-conjugating enzyme]-L-cysteine.. It functions in the pathway protein modification; protein ubiquitination. Its function is as follows. E2 conjugating enzyme that associates with the E3 ubiquitin-protein ligase EL5 to mediate ubiquitination of target proteins. In Oryza sativa subsp. japonica (Rice), this protein is Ubiquitin-conjugating enzyme E2 5B (UBC5B).